The chain runs to 244 residues: Protein DMP9 (244 aa).

The interval 1 to 56 is disordered; sequence MEKTEESVGIRVYTATPPQKPSPSPPSRSPKPVLISSLPSLPSGAAAGGGRGRKRR. A compositionally biased stretch (pro residues) spans 18–29; it reads PQKPSPSPPSRS. The span at 30–45 shows a compositional bias: low complexity; the sequence is PKPVLISSLPSLPSGA. The next 4 membrane-spanning stretches (helical) occupy residues 71 to 91, 99 to 119, 173 to 193, and 213 to 233; these read MLVN…LPSI, GINT…CFFF, LTVN…AIAF, and VMES…LVFP.

This sequence belongs to the plant DMP1 protein family. As to expression, restricted to flowers and pollen.

It localises to the endoplasmic reticulum membrane. The protein localises to the vacuole membrane. In terms of biological role, involved in membrane remodeling. The polypeptide is Protein DMP9 (Arabidopsis thaliana (Mouse-ear cress)).